The sequence spans 130 residues: Small ribosomal subunit protein uS9 (130 aa).

Positions 99–130 (KRAGLLTRDPRMKERKKPGLKAARRSPQFSKR) are disordered. A compositionally biased stretch (basic residues) spans 111 to 130 (KERKKPGLKAARRSPQFSKR).

Belongs to the universal ribosomal protein uS9 family.

In Staphylococcus aureus (strain Mu3 / ATCC 700698), this protein is Small ribosomal subunit protein uS9.